The following is a 271-amino-acid chain: (21S)-21-acetoxyl-apo-melianone synthase SDR (271 aa).

Serine 150 functions as the Proton donor in the catalytic mechanism. Tyrosine 163 serves as the catalytic Proton acceptor. The Proton donor/acceptor role is filled by lysine 167.

This sequence belongs to the short-chain dehydrogenases/reductases (SDR) family. As to expression, mainly expressed in petioles.

The catalysed reaction is 21-O-acetyl-isomeliandiol + A = (21S)-21-acetoxyl-apo-melianone + AH2. Its pathway is secondary metabolite biosynthesis; terpenoid biosynthesis. In terms of biological role, oxidoreductase involved in the biosynthesis of limonoids triterpene natural products such as azadirachtin, an antifeedant widely used as bioinsecticide, and possessing many medicinal applications including anti-tumoral, anti-malarial, anti-rheumatic, antibacterial, anti-inflammatory, anti-pyretic and diuretic effects. Catalyzes the oxidation of 21-O-acetyl-isomeliandiol to (21S)-21-acetoxyl-apo-melianone. The protein is (21S)-21-acetoxyl-apo-melianone synthase SDR of Melia azedarach (Chinaberry tree).